A 320-amino-acid polypeptide reads, in one-letter code: Cytosolic Fe-S cluster assembly factor NUBP1 (320 aa).

N-acetylmethionine is present on Met1. Cys8, Cys22, Cys25, and Cys31 together coordinate [4Fe-4S] cluster. 62-69 provides a ligand contact to ATP; the sequence is GKGGVGKS. [4Fe-4S] cluster contacts are provided by Cys235 and Cys238. At Ser319 the chain carries Phosphoserine.

This sequence belongs to the Mrp/NBP35 ATP-binding proteins family. NUBP1/NBP35 subfamily. As to quaternary structure, heterotetramer of 2 NUBP1 and 2 NUBP2 chains. Interacts with KIFC1. Interacts with the BBS/CCT complex subunit CCT1. [4Fe-4S] cluster is required as a cofactor.

The protein localises to the cytoplasm. It localises to the nucleus. The protein resides in the cell projection. Its subcellular location is the cytoskeleton. It is found in the cilium axoneme. The protein localises to the cilium basal body. It localises to the microtubule organizing center. The protein resides in the centrosome. Its subcellular location is the centriole. Functionally, component of the cytosolic iron-sulfur (Fe/S) protein assembly (CIA) machinery. Required for maturation of extramitochondrial Fe-S proteins. The NUBP1-NUBP2 heterotetramer forms a Fe-S scaffold complex, mediating the de novo assembly of an Fe-S cluster and its transfer to target apoproteins. Implicated in the regulation of centrosome duplication. Negatively regulates cilium formation and structure. The chain is Cytosolic Fe-S cluster assembly factor NUBP1 from Rattus norvegicus (Rat).